The primary structure comprises 360 residues: Inward rectifier potassium channel 13 (360 aa).

Residues 1 to 50 are Cytoplasmic-facing; that stretch reads MESSNCKVITPLLSQRHRRMVTKDGHSTLQTDGAPRGLVYLRDAWGTLID. A helical transmembrane segment spans residues 51–77; the sequence is MRWRWVMLVFSASFVLHWLVFAVLWYV. The Extracellular segment spans residues 78 to 105; sequence LAEMNGDLELDHDAPPENHTICVKYITS. An intramembrane region (helical; Pore-forming) is located at residues 106 to 122; sequence FTAAFSFSLETQLTIGY. The Selectivity filter signature appears at 119 to 124; the sequence is TIGYGT. Residues 123–131 are Extracellular-facing; sequence GTMFPSGDC. A helical membrane pass occupies residues 132–157; that stretch reads PSAIALLAIQMLLGLMLEAFITGAFV. Residues 158-360 are Cytoplasmic-facing; that stretch reads AKIARPKNRA…FQISETGLTE (203 aa). S201 carries the post-translational modification Phosphoserine; by PKC. The residue at position 287 (S287) is a Phosphoserine; by PKA.

Belongs to the inward rectifier-type potassium channel (TC 1.A.2.1) family. KCNJ13 subfamily. As to quaternary structure, homotetramer. In terms of processing, phosphorylation at Ser-201 by PKC strongly inhibits ionic currents, while phosphorylation at Ser-287 by PKA increases them.

Its subcellular location is the membrane. It is found in the cell membrane. It carries out the reaction K(+)(in) = K(+)(out). Inhibited by Ba(2+) and Cs(+), although sensitivity to those inhibitors is much lower than in other Kir channels. Inward rectifier potassium channels are characterized by a greater tendency to allow potassium to flow into the cell rather than out of it. Their voltage dependence is regulated by the concentration of extracellular potassium; as external potassium is raised, the voltage range of the channel opening shifts to more positive voltages. The inward rectification is mainly due to the blockage of outward current by internal magnesium. KCNJ13 has a very low single channel conductance, low sensitivity to block by external barium and cesium, and no dependence of its inward rectification properties on the internal blocking particle magnesium. This chain is Inward rectifier potassium channel 13 (KCNJ13), found in Cavia porcellus (Guinea pig).